The following is a 731-amino-acid chain: Catalase-peroxidase 2 (731 aa).

Residues M1 to S10 are compositionally biased toward polar residues. The segment at M1–W26 is disordered. The segment at residues W95 to Y218 is a cross-link (tryptophyl-tyrosyl-methioninium (Trp-Tyr) (with M-244)). H96 serves as the catalytic Proton acceptor. A cross-link (tryptophyl-tyrosyl-methioninium (Tyr-Met) (with W-95)) is located at residues Y218–M244. H259 is a binding site for heme b.

As to quaternary structure, homodimer. It depends on heme b as a cofactor. In terms of processing, formation of the three residue Trp-Tyr-Met cross-link is important for the catalase, but not the peroxidase activity of the enzyme.

The enzyme catalyses H2O2 + AH2 = A + 2 H2O. It catalyses the reaction 2 H2O2 = O2 + 2 H2O. Its function is as follows. Bifunctional enzyme with both catalase and broad-spectrum peroxidase activity. In Haloarcula marismortui (strain ATCC 43049 / DSM 3752 / JCM 8966 / VKM B-1809) (Halobacterium marismortui), this protein is Catalase-peroxidase 2.